A 348-amino-acid polypeptide reads, in one-letter code: Fe(3+) ions import ATP-binding protein FbpC (348 aa).

The 231-residue stretch at 7 to 237 (VELRNVTKRF…PASRFMASFM (231 aa)) folds into the ABC transporter domain. Position 39 to 46 (39 to 46 (GPSGCGKT)) interacts with ATP.

This sequence belongs to the ABC transporter superfamily. Fe(3+) ion importer (TC 3.A.1.10) family. The complex is composed of two ATP-binding proteins (FbpC), two transmembrane proteins (FbpB) and a solute-binding protein (FbpA).

The protein localises to the cell inner membrane. The catalysed reaction is Fe(3+)(out) + ATP + H2O = Fe(3+)(in) + ADP + phosphate + H(+). Part of the ABC transporter complex FbpABC involved in Fe(3+) ions import. Responsible for energy coupling to the transport system. The sequence is that of Fe(3+) ions import ATP-binding protein FbpC from Escherichia coli (strain K12).